The sequence spans 159 residues: Phosphopantetheine adenylyltransferase (159 aa).

H16 serves as a coordination point for ATP. Substrate is bound by residues K40, M72, and R86. ATP is bound by residues 87-89 (GLR), E97, and 122-128 (YQYLSAS).

Belongs to the bacterial CoaD family. In terms of assembly, homohexamer. Mg(2+) serves as cofactor.

The protein resides in the cytoplasm. The enzyme catalyses (R)-4'-phosphopantetheine + ATP + H(+) = 3'-dephospho-CoA + diphosphate. It functions in the pathway cofactor biosynthesis; coenzyme A biosynthesis; CoA from (R)-pantothenate: step 4/5. In terms of biological role, reversibly transfers an adenylyl group from ATP to 4'-phosphopantetheine, yielding dephospho-CoA (dPCoA) and pyrophosphate. In Dehalococcoides mccartyi (strain ATCC BAA-2266 / KCTC 15142 / 195) (Dehalococcoides ethenogenes (strain 195)), this protein is Phosphopantetheine adenylyltransferase.